The primary structure comprises 339 residues: GTPase Era (339 aa).

Residues 4 to 48 (RHLAKFAYREEFKGDTEALAAAVREDASTGSTSQLPLEVQFGKMS) form the RPE1 insert domain. The Era-type G domain occupies 51-220 (KTVSVCIIGR…ITSKAKISPW (170 aa)). Residues 59–66 (GRPNSGKS) form a G1 region. 59–66 (GRPNSGKS) is a GTP binding site. The G2 stretch occupies residues 85-89 (QTTRS). The interval 106–109 (DTPG) is G3. GTP is bound by residues 106-110 (DTPGI) and 168-171 (NKID). Residues 168–171 (NKID) are G4. Positions 196–198 (ISA) are G5. Positions 248-325 (LQKELPYKLT…HLFLFVKVRE (78 aa)) constitute a KH type-2 domain.

The protein belongs to the TRAFAC class TrmE-Era-EngA-EngB-Septin-like GTPase superfamily. Era GTPase family. Monomer.

The protein localises to the cytoplasm. Its subcellular location is the cell inner membrane. An essential GTPase that binds both GDP and GTP, with rapid nucleotide exchange. Plays a role in 16S rRNA processing and 30S ribosomal subunit biogenesis and possibly also in cell cycle regulation and energy metabolism. In Rickettsia conorii (strain ATCC VR-613 / Malish 7), this protein is GTPase Era.